The sequence spans 761 residues: Dipeptidyl-peptidase 4 (761 aa).

Positions 1 to 15 (MTLSAWIILVTLAMA) are cleaved as a signal peptide. Catalysis depends on charge relay system residues serine 622, aspartate 706, and histidine 738.

It belongs to the peptidase S9C family.

Its subcellular location is the membrane. May be involved in metabolism of dipeptides or may affect host defense mechanisms. The sequence is that of Dipeptidyl-peptidase 4 (DPP) from Giardia intestinalis (Giardia lamblia).